Reading from the N-terminus, the 331-residue chain is Glucokinase (331 aa).

13–18 contributes to the ATP binding site; that stretch reads GDIGGT.

The protein belongs to the bacterial glucokinase family.

It localises to the cytoplasm. The catalysed reaction is D-glucose + ATP = D-glucose 6-phosphate + ADP + H(+). This chain is Glucokinase, found in Caulobacter vibrioides (strain ATCC 19089 / CIP 103742 / CB 15) (Caulobacter crescentus).